Here is a 525-residue protein sequence, read N- to C-terminus: GMP synthase [glutamine-hydrolyzing] (525 aa).

The Glutamine amidotransferase type-1 domain maps to 9–207 (RILILDFGSQ…VRDICQCEAL (199 aa)). The active-site Nucleophile is the C86. Residues H181 and E183 contribute to the active site. The region spanning 208 to 400 (WTPAKIIDDA…LGLPYDMLYR (193 aa)) is the GMPS ATP-PPase domain. Residue 235–241 (SGGVDSS) coordinates ATP.

Homodimer.

The catalysed reaction is XMP + L-glutamine + ATP + H2O = GMP + L-glutamate + AMP + diphosphate + 2 H(+). It functions in the pathway purine metabolism; GMP biosynthesis; GMP from XMP (L-Gln route): step 1/1. Functionally, catalyzes the synthesis of GMP from XMP. The polypeptide is GMP synthase [glutamine-hydrolyzing] (Salmonella paratyphi B (strain ATCC BAA-1250 / SPB7)).